Here is an 805-residue protein sequence, read N- to C-terminus: Angiotensin-converting enzyme 2 (805 aa).

An N-terminal signal peptide occupies residues 1–17; the sequence is MSSSCWLLLSLVAVATA. The Extracellular portion of the chain corresponds to 18–740; the sequence is QSLIEEKAES…LKPPYEPPVT (723 aa). Residues 19-607 form the Peptidase M2 domain; the sequence is SLIEEKAESF…QNRNSTVGWS (589 aa). Asn53, Asn82, and Asn90 each carry an N-linked (GlcNAc...) asparagine glycan. Cysteines 133 and 141 form a disulfide. Position 169 (Arg169) interacts with chloride. Arg273 lines the substrate pocket. An N-linked (GlcNAc...) asparagine glycan is attached at Asn299. Cys344 and Cys361 are disulfide-bonded. A substrate-binding site is contributed by 345–346; sequence HP. His374 is a binding site for Zn(2+). The Proton acceptor role is filled by Glu375. Residues His378 and Glu402 each contribute to the Zn(2+) site. The N-linked (GlcNAc...) asparagine glycan is linked to Asn432. 2 residues coordinate chloride: Trp477 and Lys481. The active-site Proton donor is the His505. Tyr515 provides a ligand contact to substrate. A disulfide bond links Cys530 and Cys542. Asn546 and Asn601 each carry an N-linked (GlcNAc...) asparagine glycan. The region spanning 614-805 is the Collectrin-like domain; it reads ADQSIKVRIS…QNSDDAQTSF (192 aa). The essential for cleavage by ADAM17 stretch occupies residues 652–659; the sequence is REYFSREK. Residues Asn660 and Asn690 are each glycosylated (N-linked (GlcNAc...) asparagine). The interval 697–716 is essential for cleavage by TMPRSS11D and TMPRSS2; sequence RSEVEEAIRMSRGRINDIFG. The helical transmembrane segment at 741–761 threads the bilayer; sequence IWLIIFGVVMGTVVVGIVILI. The Cytoplasmic portion of the chain corresponds to 762-805; that stretch reads VTGIKGRKKKNETKREENPYDSMDIGKGESNAGFQNSDDAQTSF. Residues 771 to 805 form a disordered region; it reads KNETKREENPYDSMDIGKGESNAGFQNSDDAQTSF. An LIR motif is present at residues 778 to 786; that stretch reads ENPYDSMDI. At Tyr781 the chain carries Phosphotyrosine. An Endocytic sorting signal motif is present at residues 781 to 784; sequence YDSM. An SH2-binding motif is present at residues 781 to 785; sequence YDSMD. Ser783 is subject to Phosphoserine. Residue Lys788 forms a Glycyl lysine isopeptide (Lys-Gly) (interchain with G-Cter in ubiquitin) linkage. Residues 792–795 carry the PTB motif; it reads NAGF. The segment covering 793–805 has biased composition (polar residues); sequence AGFQNSDDAQTSF. The short motif at 803–805 is the PDZ-binding element; that stretch reads TSF.

Belongs to the peptidase M2 family. Homodimer. Interacts with the catalytically active form of TMPRSS2. Interacts with SLC6A19; this interaction is essential for expression and function of SLC6A19 in intestine. Interacts with ITGA5:ITGB1. Probably interacts (via endocytic sorting signal motif) with AP2M1; the interaction is inhibited by phosphorylation of Tyr-781. Interacts (via PDZ-binding motif) with NHERF1 (via PDZ domains); the interaction may enhance ACE2 membrane residence. The cofactor is Zn(2+). Chloride is required as a cofactor. Post-translationally, glycosylated. Proteolytic cleavage by ADAM17 generates a secreted form. Also cleaved by serine proteases: TMPRSS2, TMPRSS11D and HPN/TMPRSS1. In terms of processing, phosphorylated. Phosphorylation at Tyr-781 probably inhibits interaction with AP2M1 and enables interactions with proteins containing SH2 domains. Post-translationally, ubiquitinated. Ubiquitinated on Lys-788 via 'Lys-48'-linked ubiquitin. 'Lys-48'-linked deubiquitinated by USP50 on the Lys-788; leading to its stabilization. As to expression, expressed in heart, kidney and forebrain. In testis, expression is restricted to Leydig cells. In heart, expressed in endothelial cells from small and large arteries, arterial smooth muscle cells, and myocytes (at protein level). Ubiquitously expressed, with highest levels in ileum, bladder and lung.

The protein localises to the secreted. It is found in the cell membrane. The protein resides in the cytoplasm. Its subcellular location is the cell projection. It localises to the cilium. The protein localises to the apical cell membrane. The enzyme catalyses angiotensin II + H2O = angiotensin-(1-7) + L-phenylalanine. It carries out the reaction angiotensin I + H2O = angiotensin-(1-9) + L-leucine. It catalyses the reaction bradykinin(1-8) + H2O = bradykinin(1-7) + L-phenylalanine. The catalysed reaction is neurotensin + H2O = neurotensin-(1-12) + L-leucine. The enzyme catalyses kinetensin + H2O = kinetensin-(1-8) + L-leucine. It carries out the reaction dynorphin A-(1-13) + H2O = dynorphin A-(1-12) + L-lysine. It catalyses the reaction apelin-13 + H2O = apelin-12 + L-phenylalanine. The catalysed reaction is [Pyr1]apelin-13 + H2O = [Pyr1]apelin-12 + L-phenylalanine. The enzyme catalyses apelin-17 + H2O = apelin-16 + L-phenylalanine. With respect to regulation, activated by chloride and fluoride, but not bromide. Inhibited by MLN-4760, cFP_Leu, and EDTA, but not by the ACE inhibitors linosipril, captopril, enalaprilat. In terms of biological role, essential counter-regulatory carboxypeptidase of the renin-angiotensin hormone system that is a critical regulator of blood volume, systemic vascular resistance, and thus cardiovascular homeostasis. Converts angiotensin I to angiotensin 1-9, a nine-amino acid peptide with anti-hypertrophic effects in cardiomyocytes, and angiotensin II to angiotensin 1-7, which then acts as a beneficial vasodilator and anti-proliferation agent, counterbalancing the actions of the vasoconstrictor angiotensin II. Also removes the C-terminal residue from three other vasoactive peptides, neurotensin, kinetensin, and des-Arg bradykinin, but is not active on bradykinin. Also cleaves other biological peptides, such as apelins, casomorphins and dynorphin A. Plays an important role in amino acid transport by acting as binding partner of amino acid transporter SLC6A19 in intestine, regulating trafficking, expression on the cell surface, and its catalytic activity. The sequence is that of Angiotensin-converting enzyme 2 (Ace2) from Rattus norvegicus (Rat).